Consider the following 230-residue polypeptide: MSNNAIKDWPEDERPREKLLKRGAAALSDAELLALVLRTGDAAAGKSAIDLGRELLERFDGNLRELAQAELNELQQIKGLGLAKAASIKAAFTLGKRFQARRLETLERFTSPAQVFDFFHHELRDNRKELFLTLLLDGKNRITRKVQVSEGSLNQSIVHPREVFAPAVRESAAAVIFIHNHPSGDPAPSREDHEITRRLNEAGEILGIKVLDHIIIGDGAYFSFVESGLL.

The MPN domain occupies 108 to 230 (RFTSPAQVFD…YFSFVESGLL (123 aa)). 3 residues coordinate Zn(2+): His-179, His-181, and Asp-192. Residues 179–192 (HNHPSGDPAPSRED) carry the JAMM motif motif.

The protein belongs to the UPF0758 family.

The chain is UPF0758 protein Glov_0523 from Trichlorobacter lovleyi (strain ATCC BAA-1151 / DSM 17278 / SZ) (Geobacter lovleyi).